A 506-amino-acid chain; its full sequence is UDP-N-acetylglucosamine--peptide N-acetylglucosaminyltransferase GtfA subunit (506 aa).

Positions 1–78 (MTVYNINLGI…FTDIKIAPTT (78 aa)) are N-terminus R-fold-1. 16 to 19 (GVEY) contacts UDP. Positions 79–195 (VTLDQVLAQV…LYRFPDRIFY (117 aa)) are extended beta-sheet domain. The interval 196-306 (SKAELVRYFL…QPQIATIPVG (111 aa)) is C-terminus R-fold-1. An N-acetyl-D-glucosamine-binding site is contributed by His242. Residues 307 to 506 (SLDQLTYPKE…LKEVRDDSAL (200 aa)) are R-fold-2. Residues Arg328, Tyr357, and 383–385 (GHA) each bind UDP. 405–407 (GFG) contacts N-acetyl-D-glucosamine. Thr409 contacts UDP.

The protein belongs to the glycosyltransferase group 1 family. Glycosyltransferase 4 subfamily. As to quaternary structure, forms a heterotetramer with 2 subunits each of GtfA and GtfB. Part of the accessory SecA2/SecY2 protein translocation apparatus required to export cell wall protein GspB.

The protein resides in the cytoplasm. It is found in the cell membrane. The enzyme catalyses L-seryl-[protein] + UDP-N-acetyl-alpha-D-glucosamine = 3-O-[N-acetyl-alpha-D-glucosaminyl]-L-seryl-[protein] + UDP + H(+). It functions in the pathway protein modification; protein glycosylation. Required for polymorphic O-glycosylation of GspB, a serine-rich repeat cell wall protein encoded upstream in the same operon. Catalyzes the first step in glycosylation by transferring N-acetylglucosamine from UDP-GlcNAc to serine residues in GspB. Part of the accessory SecA2/SecY2 system specifically required to export GspB. Upon coexpression in E.coli with GtfB glycosylates GspB constructs. Glycosylation probably occurs intracellularly. Requires GtfB for glycosylation activity, it has no activity alone. Does not use UDP-glucose as substrate. Has a fast, probably processive glycosylation phase followed by a slower, non-processive phase. The enzyme probably modifies its tertiary conformation by opening and closing its intersubunit interfaces to accomodate the increasingly glycosylated substrate; protein substrate recognition is provided by GtfB. The polypeptide is UDP-N-acetylglucosamine--peptide N-acetylglucosaminyltransferase GtfA subunit (Streptococcus gordonii).